Reading from the N-terminus, the 553-residue chain is Serine/threonine-protein kinase WNG2 (553 aa).

Disordered regions lie at residues 1 to 20 (MMFP…RLQR) and 88 to 107 (NREP…GGAE). The N-terminal stretch at 1 to 64 (MMFPAVAAPP…GLSWVSVAVA (64 aa)) is a signal peptide. The Protein kinase domain occupies 125 to 395 (FKQLRPVDEF…IGEVMEDPFF (271 aa)). Residue lysine 186 participates in ATP binding. The Proton acceptor role is filled by aspartate 278. Residues 432–553 (REKADAAAKA…GFNKEDAQES (122 aa)) form a disordered region. Over residues 438-451 (AAKAADNAEVPAAK) the composition is skewed to low complexity. Basic and acidic residues-rich tracts occupy residues 465–486 (GDRD…EKGR), 494–524 (EGNH…ENRE), and 531–553 (QREE…AQES).

It belongs to the protein kinase superfamily. STE Ser/Thr protein kinase family. WNG subfamily. Requires Mg(2+) as cofactor.

It localises to the cytoplasmic granule. Its subcellular location is the secreted. The protein localises to the parasitophorous vacuole lumen. The enzyme catalyses L-seryl-[protein] + ATP = O-phospho-L-seryl-[protein] + ADP + H(+). It carries out the reaction L-threonyl-[protein] + ATP = O-phospho-L-threonyl-[protein] + ADP + H(+). Probable serine/threonine-protein kinase. This is Serine/threonine-protein kinase WNG2 from Toxoplasma gondii.